Consider the following 120-residue polypeptide: Immunoglobulin kappa variable 2-112 (120 aa).

The N-terminal stretch at 1–20 is a signal peptide; it reads MRCSLQFLGVLMFWISGVSG. Residues 21–43 form a framework-1 region; sequence DIVITQDELSNPVTSGESVSISC. A disulfide bridge links Cys43 with Cys113. Positions 44–59 are complementarity-determining-1; the sequence is RSSKSLLYKDGKTYLN. Residues 60–74 form a framework-2 region; the sequence is WFLQRPGQSPQLLIY. The complementarity-determining-2 stretch occupies residues 75 to 81; the sequence is LMSTRAS. A framework-3 region spans residues 82 to 113; the sequence is GVSDRFSGSGSGTDFTLEISRVKAEDVGVYYC. Positions 114–120 are complementarity-determining-3; the sequence is QQLVEYP.

The protein is Immunoglobulin kappa variable 2-112 of Mus musculus (Mouse).